Consider the following 99-residue polypeptide: High mobility group protein I (99 aa).

The tract at residues 1–99 is disordered; that stretch reads MSDSPVKKGR…ADTEEVNSSD (99 aa). Serine 4 is modified (phosphoserine; by CDC2 and MAPK). A DNA-binding region (a.T hook 1) is located at residues 7-19; sequence KKGRGRPAKAKPE. The span at 16-46 shows a compositional bias: basic and acidic residues; that stretch reads AKPEETASPKAAKKEEKKVEEVPKKIEESTK. The residue at position 23 (serine 23) is a Phosphoserine; by MAPK. Residues 54–66 constitute a DNA-binding region (a.T hook 2); sequence KKGRGRPSKGDKA. Serine 73 carries the post-translational modification Phosphoserine; by PKC. A DNA-binding region (a.T hook 3) is located at residues 74-86; it reads GKGRGRPAKNAKK. A compositionally biased stretch (acidic residues) spans 90 to 99; sequence ADTEEVNSSD.

This sequence belongs to the HMGA family. Post-translationally, phosphorylated in a cell-cycle dependent manner; substantially reduced in cells that have finished proliferating and are differentiated. Phosphorylation at Ser-4 and Ser-23 results in a 10-fold weakening of DNA-binding activity and altered the mode of protein-DNA interaction.

The protein resides in the nucleus. The protein localises to the nucleolus. It localises to the chromosome. Functionally, binds preferentially to the minor groove of A+T rich regions in double-stranded DNA via the second and third DBA-binding domains. It is suggested that these proteins could function in nucleosome phasing and in the 3'-end processing of mRNA transcripts. They are also involved in the transcription regulation of genes containing, or in close proximity to A+T-rich regions. The protein is High mobility group protein I of Chironomus tentans (Midge).